A 173-amino-acid polypeptide reads, in one-letter code: uncharacterized protein (173 aa).

2 disordered regions span residues 1 to 23 (MGDLPWAPPEAQAPSTAGAGDVA) and 48 to 173 (TGAA…APQR). A compositionally biased stretch (low complexity) spans 49-60 (GAAPGSAQAGPP). Positions 70 to 83 (PRGPQAPPRLPPSL) are enriched in pro residues. Over residues 123 to 136 (PACAGSSAPGSPAA) the composition is skewed to low complexity.

This is an uncharacterized protein from Homo sapiens (Human).